A 771-amino-acid chain; its full sequence is Choline transporter-like protein 1 (771 aa).

The chain crosses the membrane as a helical span at residues 96 to 116 (FLFFVFLCGWVVVAGFGIMWG). 2 N-linked (GlcNAc...) asparagine glycosylation sites follow: Asn141 and Asn259. The next 4 helical transmembrane spans lie at 312–332 (WWQT…WTVI), 335–355 (LLGS…LGFG), 392–412 (LVVA…ILFI), and 441–461 (LFPF…AIWL). A glycan (N-linked (GlcNAc...) asparagine) is linked at Asn480. 5 helical membrane-spanning segments follow: residues 514–534 (LFAF…ALAG), 566–586 (LGSI…RVLL), 603–623 (WFLM…KFLT), 662–682 (AGIL…ILSF), and 701–721 (YYFV…DLFF).

The protein belongs to the CTL (choline transporter-like) family.

The protein resides in the membrane. This is Choline transporter-like protein 1 (chtl-1) from Caenorhabditis elegans.